The primary structure comprises 365 residues: Peptide chain release factor 2 (365 aa).

Gln-252 bears the N5-methylglutamine mark.

Belongs to the prokaryotic/mitochondrial release factor family. Methylated by PrmC. Methylation increases the termination efficiency of RF2.

It localises to the cytoplasm. Its function is as follows. Peptide chain release factor 2 directs the termination of translation in response to the peptide chain termination codons UGA and UAA. This Aeromonas salmonicida (strain A449) protein is Peptide chain release factor 2.